Consider the following 686-residue polypeptide: ATP-dependent zinc metalloprotease FTSH 6, chloroplastic (686 aa).

Over residues 1–14 the composition is skewed to polar residues; the sequence is MSPTAMSLTTTTSR. The disordered stretch occupies residues 1–52; it reads MSPTAMSLTTTTSRLPICRAQGGGVAKEKRTTPPPAKITPPSSSSSEAAGLS. Residues 1-75 constitute a chloroplast transit peptide; that stretch reads MSPTAMSLTT…LGLTAARPAR (75 aa). Residues 39-52 are compositionally biased toward low complexity; the sequence is TPPSSSSSEAAGLS. A helical transmembrane segment spans residues 164–184; that stretch reads VMLLDLLVNFGFPLLFVASLL. 261-268 serves as a coordination point for ATP; the sequence is GPPGTGKT. Position 483 (His-483) interacts with Zn(2+). The active site involves Glu-484. Residues His-487 and Asp-562 each coordinate Zn(2+).

This sequence in the N-terminal section; belongs to the AAA ATPase family. In the C-terminal section; belongs to the peptidase M41 family. Zn(2+) serves as cofactor.

It is found in the plastid. It localises to the chloroplast thylakoid membrane. Its function is as follows. Probable ATP-dependent zinc metallopeptidase. The polypeptide is ATP-dependent zinc metalloprotease FTSH 6, chloroplastic (FTSH6) (Oryza sativa subsp. japonica (Rice)).